The following is a 220-amino-acid chain: Deoxyribose-phosphate aldolase 1 (220 aa).

Residue Asp89 is the Proton donor/acceptor of the active site. Catalysis depends on Lys151, which acts as the Schiff-base intermediate with acetaldehyde. Lys180 functions as the Proton donor/acceptor in the catalytic mechanism.

It belongs to the DeoC/FbaB aldolase family. DeoC type 1 subfamily.

It localises to the cytoplasm. The catalysed reaction is 2-deoxy-D-ribose 5-phosphate = D-glyceraldehyde 3-phosphate + acetaldehyde. It participates in carbohydrate degradation; 2-deoxy-D-ribose 1-phosphate degradation; D-glyceraldehyde 3-phosphate and acetaldehyde from 2-deoxy-alpha-D-ribose 1-phosphate: step 2/2. Catalyzes a reversible aldol reaction between acetaldehyde and D-glyceraldehyde 3-phosphate to generate 2-deoxy-D-ribose 5-phosphate. The polypeptide is Deoxyribose-phosphate aldolase 1 (Staphylococcus aureus (strain MSSA476)).